The sequence spans 141 residues: Hemoglobin subunit alpha (141 aa).

The region spanning 1–141 is the Globin domain; that stretch reads VLSEADKSNV…VSTVLTSKYR (141 aa). O2 is bound at residue histidine 58. Histidine 87 is a heme b binding site.

This sequence belongs to the globin family. Heterotetramer of two alpha chains and two beta chains. When oxygenated in vitro, exists virtually only in polymeric form. When deoxygenated, forms tetramers, octamers and larger polymers. Red blood cells.

Involved in oxygen transport from the lung to the various peripheral tissues. This chain is Hemoglobin subunit alpha, found in Paleosuchus palpebrosus (Cuvier's smooth-fronted caiman).